Reading from the N-terminus, the 186-residue chain is UPF0149 protein Pfl01_5435 (186 aa).

The protein belongs to the UPF0149 family.

The polypeptide is UPF0149 protein Pfl01_5435 (Pseudomonas fluorescens (strain Pf0-1)).